Consider the following 178-residue polypeptide: Fluoride-specific ion channel FluC 2 (178 aa).

The next 4 helical transmembrane spans lie at 25-45, 63-83, 97-117, and 129-149; these read PDIHLDIVLVVFCGGAIGTAI, FVANMLACFCYAGLTAYLAGA, GLGMGVCGGLSTMSTLALEGF, and IAYLLVTFALGLVCASAGVWA. Residues G104 and S107 each coordinate Na(+).

It belongs to the fluoride channel Fluc/FEX (TC 1.A.43) family.

Its subcellular location is the cell membrane. It catalyses the reaction fluoride(in) = fluoride(out). Na(+) is not transported, but it plays an essential structural role and its presence is essential for fluoride channel function. Fluoride-specific ion channel. Important for reducing fluoride concentration in the cell, thus reducing its toxicity. This chain is Fluoride-specific ion channel FluC 2, found in Bifidobacterium longum (strain NCC 2705).